We begin with the raw amino-acid sequence, 278 residues long: Envelope glycoprotein L (278 aa).

Positions 1 to 30 (MCRRPDCGFSFSPGPVVLLWCCLLLPIVSS) are cleaved as a signal peptide. The gL betaherpesvirus-type domain occupies 43-256 (VPAECPELTR…DKYYAGLPPE (214 aa)). Cys-154 and Cys-159 form a disulfide bridge.

The protein belongs to the herpesviridae glycoprotein L (gL) family. Betaherpesvirinae gL subfamily. In terms of assembly, interacts with glycoprotein H (gH); this interaction is necessary for the correct processing and cell surface expression of gH. Forms the envelope pentamer complex (PC) composed of gH, gL, UL128, UL130, and UL131A. The pentamer interacts with host NRP2. Forms the envelope trimer complex composed of gH, gL, and gO. The trimer interacts with host PDGFRA. The trimer also interacts with host EPHA2.

The protein resides in the virion membrane. It localises to the host cell membrane. The protein localises to the host Golgi apparatus. Its subcellular location is the host trans-Golgi network. Its function is as follows. The heterodimer glycoprotein H-glycoprotein L is required for the fusion of viral and plasma membranes leading to virus entry into the host cell. Acts as a functional inhibitor of gH and maintains gH in an inhibited form. Upon binding to host integrins, gL dissociates from gH leading to activation of the viral fusion glycoproteins gB and gH. In human cytomegalovirus, forms two distincts complexes to mediate viral entry, a trimer and a pentamer at the surface of the virion envelope. The gH-gL-gO trimer is required for infection in fibroblasts by interacting with host PDGFRA, and in glioblastoma cells by interacting with host EPHA2. The gH-gL-UL128-UL130-UL131A pentamer is essential for viral entry in epithelial, endothelial and myeloid cells via interaction with host NRP2. This Human cytomegalovirus (strain 5040) (HHV-5) protein is Envelope glycoprotein L.